The sequence spans 285 residues: Phosphate import ATP-binding protein PstB (285 aa).

Positions 22 to 262 constitute an ABC transporter domain; that stretch reads MRAVDLTLGF…PQHEETVRYF (241 aa). Residue 54 to 61 coordinates ATP; the sequence is GPTGSGKT. A disordered region spans residues 266–285; the sequence is RPAQGSDRGSSQTAGVAESQ. Polar residues predominate over residues 272–285; sequence DRGSSQTAGVAESQ.

It belongs to the ABC transporter superfamily. Phosphate importer (TC 3.A.1.7) family. As to quaternary structure, the complex is composed of two ATP-binding proteins (PstB), two transmembrane proteins (PstC and PstA) and a solute-binding protein (PstS).

The protein resides in the cell membrane. The catalysed reaction is phosphate(out) + ATP + H2O = ADP + 2 phosphate(in) + H(+). Part of the ABC transporter complex PstSACB involved in phosphate import. Responsible for energy coupling to the transport system. The chain is Phosphate import ATP-binding protein PstB from Mycobacterium intracellulare.